The sequence spans 304 residues: Fructose permease IIC component (304 aa).

A PTS EIIC type-2 domain is found at Ile1–Lys304. The next 8 helical transmembrane spans lie at Phe20–Met40, Asn62–Leu82, Pro98–Ile118, Asn140–Leu160, Ala181–Phe201, Ile214–Ala234, Val238–Val258, and Leu277–Ile297.

It is found in the cell membrane. Functionally, the phosphoenolpyruvate-dependent sugar phosphotransferase system (PTS), a major carbohydrate active -transport system, catalyzes the phosphorylation of incoming sugar substrates concomitant with their translocation across the cell membrane. This system is involved in fructose transport. This chain is Fructose permease IIC component (fruA), found in Bacillus amyloliquefaciens (Bacillus velezensis).